The primary structure comprises 231 residues: MKKWKKKTFIPLLYLTSIVFLPWWVSFLFNKSLESWIINCCNTSKSETFLNDIQEKSILEKFMELEDLVRLNEIIKEYPETHLQKFRIGIHKETIQLIKMHNEDRIHTILHFSTNIICFIILSGYSILSNEELIILNSWVQEFLYNLSDTIKAFSILLLTDLCIGFHSPHGWELMIGSVYKDFGFAHNDQIISGLVSTFPVILDTIFKYWIFRYLNRVSPSLVVIYHSMND.

3 consecutive transmembrane segments (helical) span residues 9–29 (FIPL…SFLF), 116–136 (IICF…LIIL), and 191–211 (IISG…KYWI).

It belongs to the CemA family.

The protein localises to the plastid. It localises to the chloroplast inner membrane. It catalyses the reaction K(+)(in) + H(+)(out) = K(+)(out) + H(+)(in). Contributes to K(+)/H(+) antiport activity by supporting proton efflux to control proton extrusion and homeostasis in chloroplasts in a light-dependent manner to modulate photosynthesis. Prevents excessive induction of non-photochemical quenching (NPQ) under continuous-light conditions. Indirectly promotes efficient inorganic carbon uptake into chloroplasts. The polypeptide is Potassium/proton antiporter CemA (Manihot esculenta (Cassava)).